We begin with the raw amino-acid sequence, 284 residues long: Four and a half LIM domains protein 5 (284 aa).

A C4-type zinc finger spans residues cysteine 8–cysteine 32. 3 consecutive LIM zinc-binding domains span residues asparagine 39–serine 100, lysine 101–alanine 160, and histidine 161–lysine 220.

As to quaternary structure, interacts with CREM (via the third LIM domain). Interacts (via second LIM domain) with SPAG8. Testis-specific, temporal expression is coordinated with CREM.

It localises to the nucleus. Its function is as follows. May be involved in the regulation of spermatogenesis. Stimulates CREM transcriptional activity in a phosphorylation-independent manner. This Mus musculus (Mouse) protein is Four and a half LIM domains protein 5 (Fhl5).